Consider the following 226-residue polypeptide: Peroxynitrite isomerase 2 (226 aa).

The GXWXGXG motif lies at 73–79 (GVWRGEG). K189 and H216 together coordinate heme b.

Belongs to the nitrobindin family. As to quaternary structure, homodimer. It depends on heme b as a cofactor.

The catalysed reaction is peroxynitrite = nitrate. It functions in the pathway nitrogen metabolism. In terms of biological role, heme-binding protein able to scavenge peroxynitrite and to protect free L-tyrosine against peroxynitrite-mediated nitration, by acting as a peroxynitrite isomerase that converts peroxynitrite to nitrate. Therefore, this protein likely plays a role in peroxynitrite sensing and in the detoxification of reactive nitrogen and oxygen species (RNS and ROS, respectively). Is able to bind nitric oxide (NO) in vitro, but may act as a sensor of peroxynitrite levels in vivo. In Mycobacterium bovis (strain ATCC BAA-935 / AF2122/97), this protein is Peroxynitrite isomerase 2.